We begin with the raw amino-acid sequence, 452 residues long: NADH-ubiquinone oxidoreductase chain 4 (452 aa).

The next 14 membrane-spanning stretches (helical) occupy residues 4-24, 29-49, 59-79, 88-110, 114-136, 144-164, 182-202, 221-241, 252-272, 282-304, 309-331, 345-365, 390-410, and 432-452; these read LVLG…SMVW, VGSV…MTIS, FVSL…LLAS, LIYQ…LAFM, LLLF…TRWG, AGTY…ICLI, VFQL…AFLV, PIAG…YGMM, MLSS…MGGI, LIAY…GVAW, AMVL…NLWY, LIMI…MNMA, IVYM…LFGM, and LLTT…GLMF.

The protein belongs to the complex I subunit 4 family.

The protein localises to the mitochondrion membrane. The enzyme catalyses a ubiquinone + NADH + 5 H(+)(in) = a ubiquinol + NAD(+) + 4 H(+)(out). In terms of biological role, core subunit of the mitochondrial membrane respiratory chain NADH dehydrogenase (Complex I) that is believed to belong to the minimal assembly required for catalysis. Complex I functions in the transfer of electrons from NADH to the respiratory chain. The immediate electron acceptor for the enzyme is believed to be ubiquinone. The polypeptide is NADH-ubiquinone oxidoreductase chain 4 (ND4) (Branchiostoma floridae (Florida lancelet)).